The sequence spans 588 residues: Succinate dehydrogenase flavoprotein subunit (588 aa).

Residues 14–19, 37–52, and aspartate 221 each bind FAD; these read GAGGAG and SKVFPTRSHTVSAQGG. Residue histidine 45 is modified to Tele-8alpha-FAD histidine. Positions 242 and 254 each coordinate substrate. Lysine 267 bears the N6-acetyllysine mark. Arginine 286 functions as the Proton acceptor in the catalytic mechanism. Histidine 354 lines the substrate pocket. Glutamate 388 contributes to the FAD binding site. Arginine 399 provides a ligand contact to substrate. Residue 404 to 405 coordinates FAD; the sequence is SL.

It belongs to the FAD-dependent oxidoreductase 2 family. FRD/SDH subfamily. In terms of assembly, part of an enzyme complex containing four subunits: a flavoprotein, an iron-sulfur, cytochrome b-556, and a hydrophobic anchor protein. The complex forms trimers. The cofactor is FAD.

Its subcellular location is the cell inner membrane. It carries out the reaction a quinone + succinate = fumarate + a quinol. It functions in the pathway carbohydrate metabolism; tricarboxylic acid cycle; fumarate from succinate (bacterial route): step 1/1. In terms of biological role, two distinct, membrane-bound, FAD-containing enzymes are responsible for the catalysis of fumarate and succinate interconversion; the fumarate reductase is used in anaerobic growth, and the succinate dehydrogenase is used in aerobic growth. This is Succinate dehydrogenase flavoprotein subunit (sdhA) from Escherichia coli O157:H7.